Here is a 195-residue protein sequence, read N- to C-terminus: Pyridoxal 5'-phosphate synthase subunit PdxT (195 aa).

46-48 (GES) is a binding site for L-glutamine. Residue Cys78 is the Nucleophile of the active site. Residues Arg107 and 135–136 (IR) contribute to the L-glutamine site. Active-site charge relay system residues include His172 and Glu174.

It belongs to the glutaminase PdxT/SNO family. In terms of assembly, in the presence of PdxS, forms a dodecamer of heterodimers. Only shows activity in the heterodimer.

It carries out the reaction aldehydo-D-ribose 5-phosphate + D-glyceraldehyde 3-phosphate + L-glutamine = pyridoxal 5'-phosphate + L-glutamate + phosphate + 3 H2O + H(+). It catalyses the reaction L-glutamine + H2O = L-glutamate + NH4(+). It participates in cofactor biosynthesis; pyridoxal 5'-phosphate biosynthesis. Functionally, catalyzes the hydrolysis of glutamine to glutamate and ammonia as part of the biosynthesis of pyridoxal 5'-phosphate. The resulting ammonia molecule is channeled to the active site of PdxS. In Corynebacterium jeikeium (strain K411), this protein is Pyridoxal 5'-phosphate synthase subunit PdxT.